A 287-amino-acid polypeptide reads, in one-letter code: Bifunctional protein FolD (287 aa).

NADP(+) is bound by residues 160 to 162, S189, and T230; that span reads GRS.

The protein belongs to the tetrahydrofolate dehydrogenase/cyclohydrolase family. Homodimer.

It carries out the reaction (6R)-5,10-methylene-5,6,7,8-tetrahydrofolate + NADP(+) = (6R)-5,10-methenyltetrahydrofolate + NADPH. It catalyses the reaction (6R)-5,10-methenyltetrahydrofolate + H2O = (6R)-10-formyltetrahydrofolate + H(+). The protein operates within one-carbon metabolism; tetrahydrofolate interconversion. In terms of biological role, catalyzes the oxidation of 5,10-methylenetetrahydrofolate to 5,10-methenyltetrahydrofolate and then the hydrolysis of 5,10-methenyltetrahydrofolate to 10-formyltetrahydrofolate. The chain is Bifunctional protein FolD from Chlamydia abortus (strain DSM 27085 / S26/3) (Chlamydophila abortus).